The chain runs to 437 residues: Branched-chain amino acid transport system 3 carrier protein (437 aa).

The next 12 helical transmembrane spans lie at 9–29 (ILALGFMTFALFVGAGNIIFP), 40–60 (VWLAALGFLITAVGLPVITVI), 79–99 (YAGGLLAAVCYLAVGPLFAIP), 120–140 (ALFVYSLAYFLLALAISLYPG), 155–175 (ILALAILGVAAFLWPAGPIGT), 189–209 (FVNGYLTMDTLAALVFGIVIV), 226–246 (YAIVAGLIAGVGLVLVYVSLF), 277–297 (LGSSFLAGLIALACLVTAVGL), 316–336 (LVIILAGFSFIVSNLGLTKLI), 342–362 (VLTAIYPPCIVLVALSFCIGL), 369–389 (ILAPVMLVSLAFGVLDALKAA), and 399–419 (LLHLPLAEQGLAWLIPSVATL).

Belongs to the branched chain amino acid transporter family.

The protein localises to the cell inner membrane. Component of the LIV-III transport system for branched-chain amino acids. BraZ is specific for isoleucine and valine. The LIV-III transport system may be H(+)-coupled. This chain is Branched-chain amino acid transport system 3 carrier protein (braZ), found in Pseudomonas aeruginosa (strain ATCC 15692 / DSM 22644 / CIP 104116 / JCM 14847 / LMG 12228 / 1C / PRS 101 / PAO1).